Reading from the N-terminus, the 805-residue chain is Endonuclease MutS2 (805 aa).

344–351 (GPNGGGKT) provides a ligand contact to ATP. Positions 705–724 (RSRSEKLQAASEARPSAPPG) are disordered. A Smr domain is found at 729–804 (LDVRGLRVEE…GDAVTVVSLR (76 aa)).

It belongs to the DNA mismatch repair MutS family. MutS2 subfamily. Homodimer. Binds to stalled ribosomes, contacting rRNA.

Endonuclease that is involved in the suppression of homologous recombination and thus may have a key role in the control of bacterial genetic diversity. In terms of biological role, acts as a ribosome collision sensor, splitting the ribosome into its 2 subunits. Detects stalled/collided 70S ribosomes which it binds and splits by an ATP-hydrolysis driven conformational change. Acts upstream of the ribosome quality control system (RQC), a ribosome-associated complex that mediates the extraction of incompletely synthesized nascent chains from stalled ribosomes and their subsequent degradation. Probably generates substrates for RQC. This chain is Endonuclease MutS2, found in Anaeromyxobacter sp. (strain Fw109-5).